The following is a 685-amino-acid chain: MFSRLLNRGNGGVNKNITSGLLLRRTTTTTTRLSYINNSPTLSIRSFCSKSTTITSDEKLDLSGYTTDRIRNFSIIAHIDHGKTTLSTKLLSLTGTLPKSIYGSGEDSLVQKEKSEERREQYLDKLQVEKERGITVKAQTCTMKYRNKEDGKDYLLNLIDTPGHVDFSYEVSRSLMACQGALLVVDAVQGVQAQTMANYYLALDSGLEVIPVINKIDLPTADVERVKQELKDAFGFHPDDAVLVSAKTGVGITDILPAVIDRIPPPQEPTKSPKVPFKALLFDSWFDRFRGVICLIKVVDGKVKKGDSIVSAGNKQTYEVFDVGIMHPEQRPAPSLFTGQVGYITPGMKTSKEARVGDTFYMKDFPVEPLPGFQPAKQMVFAGIYPVDSLDYTQLRESFEKLMLTDSSISMTNETSVALGMGFRCGFLGLLHMDVVLQRLEQEYGQVVIATPPTVPYRCLLTDGKEILISNPAGYPSAEHLSKTFEPMVTGHVTLPTEYFGAVVKLCMDSRGILTNQETLEGNRTRITFNFPLGEIVTDFYDNLKRISSGYASLDYEDNGYQESDVAKVRVLLNGEEVDSLSAIVHKSNAQRYSRSLVKRLRKVIDRQMFQVNIQAMVGSDVQARETISAMRKDVTAKCYGGDITRRRKLLDKQKEGKKRMKQMGCVELSQEGFLKLMKSTNDDD.

The transit peptide at 1–54 directs the protein to the mitochondrion; it reads MFSRLLNRGNGGVNKNITSGLLLRRTTTTTTRLSYINNSPTLSIRSFCSKSTTI. A tr-type G domain is found at 68-267; sequence DRIRNFSIIA…AVIDRIPPPQ (200 aa). Residues 77–84, 160–164, and 214–217 contribute to the GTP site; these read AHIDHGKT, DTPGH, and NKID.

The protein belongs to the TRAFAC class translation factor GTPase superfamily. Classic translation factor GTPase family. LepA subfamily.

The protein resides in the mitochondrion inner membrane. The enzyme catalyses GTP + H2O = GDP + phosphate + H(+). Functionally, promotes mitochondrial protein synthesis. May act as a fidelity factor of the translation reaction, by catalyzing a one-codon backward translocation of tRNAs on improperly translocated ribosomes. Binds to mitochondrial ribosomes in a GTP-dependent manner. The chain is Translation factor GUF1 homolog, mitochondrial (guf1) from Dictyostelium discoideum (Social amoeba).